The chain runs to 1053 residues: Serine/threonine-protein phosphatase 6 regulatory ankyrin repeat subunit A (1053 aa).

ANK repeat units follow at residues 40–69 (EKRT…RVNA), 73–102 (KWLT…DVNA), 106–135 (NWQT…NVNV), 139–168 (AGRT…NINA), 172–201 (KDRR…EVTC), 205–234 (KSYT…DMNE), 238–267 (YGNT…IVNQ), 271–301 (KGFT…DVNM), 305–334 (DGKT…VIDC), 338–367 (NGNT…DTAK), 371–400 (HGMF…DIDT), 404–433 (FGRT…DFNK), 437–466 (FGRS…SVND), 470–500 (RGCT…NPGI), 504–534 (QGYN…DVLM), 549–578 (ATIS…DLDV), 582–611 (SGRT…SILV), 616–645 (LKRT…PQNA), 652–681 (NGQT…NVDA), 685–714 (WGRT…KCLL), 718–747 (RGRT…SMDA), 755–784 (HGYT…FQKT), 787–817 (NAFS…SIVN), 822–851 (KGRT…QVNS), 855–885 (TGKT…ELTL), 889–918 (SKNT…DRNL), and 925–954 (ALQT…SVLA). Phosphoserine is present on residues serine 1007 and serine 1011.

As to quaternary structure, protein phosphatase 6 (PP6) holoenzyme is proposed to be a heterotrimeric complex formed by the catalytic subunit, a SAPS domain-containing subunit (PP6R) and an ankyrin repeat-domain containing regulatory subunit (ARS). Interacts with PPP6C, PPP6R1 and PPP6R3. Interacts with PPP1C and HNRPK. Post-translationally, ubiquitinated by the ECS(RAB40C) complex leading to its degradation and decreased PP6 activity.

The protein resides in the nucleus. It is found in the nucleoplasm. The protein localises to the cytoplasm. Its subcellular location is the cytosol. It localises to the cell projection. The protein resides in the lamellipodium. Regulatory subunit of protein phosphatase 6 (PP6) that may be involved in the recognition of phosphoprotein substrates. Involved in the PP6-mediated dephosphorylation of NFKBIE opposing its degradation in response to TNF-alpha. Selectively inhibits the phosphatase activity of PPP1C. Targets PPP1C to modulate HNRPK phosphorylation. Involved in the PP6-mediated dephosphorylation of MOB1 and induced focal adhesion assembly during cell migration. This Homo sapiens (Human) protein is Serine/threonine-protein phosphatase 6 regulatory ankyrin repeat subunit A.